A 459-amino-acid polypeptide reads, in one-letter code: Putrescine aminotransferase (459 aa).

Residues 150-151 and Q274 contribute to the pyridoxal 5'-phosphate site; that span reads GT. The residue at position 300 (K300) is an N6-(pyridoxal phosphate)lysine. T332 lines the pyridoxal 5'-phosphate pocket.

It belongs to the class-III pyridoxal-phosphate-dependent aminotransferase family. Putrescine aminotransferase subfamily. It depends on pyridoxal 5'-phosphate as a cofactor.

The catalysed reaction is an alkane-alpha,omega-diamine + 2-oxoglutarate = an omega-aminoaldehyde + L-glutamate. The enzyme catalyses putrescine + 2-oxoglutarate = 1-pyrroline + L-glutamate + H2O. It catalyses the reaction cadaverine + 2-oxoglutarate = 5-aminopentanal + L-glutamate. The protein operates within amine and polyamine degradation; putrescine degradation; 4-aminobutanal from putrescine (transaminase route): step 1/1. Catalyzes the aminotransferase reaction from putrescine to 2-oxoglutarate, leading to glutamate and 4-aminobutanal, which spontaneously cyclizes to form 1-pyrroline. This is the first step in one of two pathways for putrescine degradation, where putrescine is converted into 4-aminobutanoate (gamma-aminobutyrate or GABA) via 4-aminobutanal. Also functions as a cadaverine transaminase in a a L-lysine degradation pathway to succinate that proceeds via cadaverine, glutarate and L-2-hydroxyglutarate. The chain is Putrescine aminotransferase from Escherichia coli O8 (strain IAI1).